The sequence spans 145 residues: D-aminoacyl-tRNA deacylase (145 aa).

Residues 137–138 (GP) carry the Gly-cisPro motif, important for rejection of L-amino acids motif.

This sequence belongs to the DTD family. As to quaternary structure, homodimer.

The protein localises to the cytoplasm. The catalysed reaction is glycyl-tRNA(Ala) + H2O = tRNA(Ala) + glycine + H(+). It catalyses the reaction a D-aminoacyl-tRNA + H2O = a tRNA + a D-alpha-amino acid + H(+). An aminoacyl-tRNA editing enzyme that deacylates mischarged D-aminoacyl-tRNAs. Also deacylates mischarged glycyl-tRNA(Ala), protecting cells against glycine mischarging by AlaRS. Acts via tRNA-based rather than protein-based catalysis; rejects L-amino acids rather than detecting D-amino acids in the active site. By recycling D-aminoacyl-tRNA to D-amino acids and free tRNA molecules, this enzyme counteracts the toxicity associated with the formation of D-aminoacyl-tRNA entities in vivo and helps enforce protein L-homochirality. The polypeptide is D-aminoacyl-tRNA deacylase (Shewanella piezotolerans (strain WP3 / JCM 13877)).